The sequence spans 131 residues: Small ribosomal subunit protein uS9 (131 aa).

This sequence belongs to the universal ribosomal protein uS9 family.

This Mannheimia succiniciproducens (strain KCTC 0769BP / MBEL55E) protein is Small ribosomal subunit protein uS9.